The following is a 309-amino-acid chain: Uracil phosphoribosyltransferase homolog (309 aa).

The tract at residues 1–38 (MATELQCPDSMPCHNQQVNSASTPSPEQLRPGDLILDH) is disordered. Over residues 13 to 26 (CHNQQVNSASTPSP) the composition is skewed to polar residues. Serine 25 is modified (phosphoserine). GTP is bound by residues arginine 133, arginine 142, and 176-179 (EKGN). Arginine 186 is a 5-phospho-alpha-D-ribose 1-diphosphate binding site. The GTP site is built by arginine 203 and arginine 232. 238–246 (YPILSTGNT) provides a ligand contact to 5-phospho-alpha-D-ribose 1-diphosphate. 299–301 (THF) contacts uracil.

Belongs to the UPRTase family. As to expression, highly expressed in leukocytes, liver, spleen and thymus, with lower expression in brain, lung and skeletal muscle.

The protein resides in the cytoplasm. It localises to the nucleus. In Homo sapiens (Human), this protein is Uracil phosphoribosyltransferase homolog (UPRT).